We begin with the raw amino-acid sequence, 529 residues long: MFS glucose transporter mfs1 (529 aa).

The next 12 membrane-spanning stretches (helical) occupy residues V7–S27, S52–A72, I86–V106, V109–I129, V138–Y158, I179–P199, L272–M292, L301–Y321, A330–G350, A375–I395, A415–W439, and Y446–A464.

This sequence belongs to the major facilitator superfamily. Sugar transporter (TC 2.A.1.1) family.

It localises to the membrane. Functionally, probable MFS glucose transporter; part of the gene cluster 27 that mediates the biosynthesis of asparasone A, a sclerotium-specific anthraquinone pigment important for sclerotial survival. The sequence is that of MFS glucose transporter mfs1 from Aspergillus flavus (strain ATCC 200026 / FGSC A1120 / IAM 13836 / NRRL 3357 / JCM 12722 / SRRC 167).